A 302-amino-acid chain; its full sequence is Phosphoribosylaminoimidazole-succinocarboxamide synthase (302 aa).

Belongs to the SAICAR synthetase family.

It catalyses the reaction 5-amino-1-(5-phospho-D-ribosyl)imidazole-4-carboxylate + L-aspartate + ATP = (2S)-2-[5-amino-1-(5-phospho-beta-D-ribosyl)imidazole-4-carboxamido]succinate + ADP + phosphate + 2 H(+). It participates in purine metabolism; IMP biosynthesis via de novo pathway; 5-amino-1-(5-phospho-D-ribosyl)imidazole-4-carboxamide from 5-amino-1-(5-phospho-D-ribosyl)imidazole-4-carboxylate: step 1/2. The sequence is that of Phosphoribosylaminoimidazole-succinocarboxamide synthase from Cupriavidus pinatubonensis (strain JMP 134 / LMG 1197) (Cupriavidus necator (strain JMP 134)).